Here is a 103-residue protein sequence, read N- to C-terminus: Histone H4 (103 aa).

A compositionally biased stretch (gly residues) spans 1–14; sequence MSGRGKGGKGLGKG. A disordered region spans residues 1–20; the sequence is MSGRGKGGKGLGKGGAKRHR. An N-acetylserine modification is found at Ser2. An N6-acetyl-N6-methyllysine; alternate mark is found at Lys6 and Lys13. Position 17 is an N6-acetyllysine (Lys17). Residues 17 to 21 mediate DNA binding; the sequence is KRHRK. Lys21 is subject to N6-methyllysine.

This sequence belongs to the histone H4 family. In terms of assembly, the nucleosome is a histone octamer containing two molecules each of H2A, H2B, H3 and H4 assembled in one H3-H4 heterotetramer and two H2A-H2B heterodimers. The octamer wraps approximately 147 bp of DNA.

The protein resides in the nucleus. Its subcellular location is the chromosome. Its function is as follows. Core component of nucleosome. Nucleosomes wrap and compact DNA into chromatin, limiting DNA accessibility to the cellular machineries which require DNA as a template. Histones thereby play a central role in transcription regulation, DNA repair, DNA replication and chromosomal stability. DNA accessibility is regulated via a complex set of post-translational modifications of histones, also called histone code, and nucleosome remodeling. This chain is Histone H4, found in Ascaris suum (Pig roundworm).